Here is a 457-residue protein sequence, read N- to C-terminus: Squalene epoxidase erg1 (457 aa).

Residues 15-16, 35-36, Arg43, Arg114, Val130, Asp293, and Met306 each bind FAD; these read IT and ER. The next 3 membrane-spanning stretches (helical) occupy residues 347-364, 409-429, and 433-453; these read GYSF…KLFT, FYAV…ALLM, and IIES…YILS.

This sequence belongs to the squalene monooxygenase family. Requires FAD as cofactor.

The protein resides in the microsome membrane. The protein localises to the endoplasmic reticulum membrane. It localises to the vacuole membrane. The enzyme catalyses squalene + reduced [NADPH--hemoprotein reductase] + O2 = (S)-2,3-epoxysqualene + oxidized [NADPH--hemoprotein reductase] + H2O + H(+). The protein operates within terpene metabolism; lanosterol biosynthesis; lanosterol from farnesyl diphosphate: step 2/3. Its pathway is steroid metabolism; ergosterol biosynthesis. Its activity is regulated as follows. Activity is blocked by the allylamine class antifungal terbinafine. Functionally, squalene epoxidase; part of the third module of ergosterol biosynthesis pathway that includes by the late steps of the pathway. Erg1 catalyzes the epoxidation of squalene into 2,3-epoxysqualene. The third module or late pathway involves the ergosterol synthesis itself through consecutive reactions that mainly occur in the endoplasmic reticulum (ER) membrane. Firstly, the squalene synthase erg9 catalyzes the condensation of 2 farnesyl pyrophosphate moieties to form squalene, which is the precursor of all steroids. Secondly, squalene is converted into lanosterol by the consecutive action of the squalene epoxidase erg1 and the lanosterol synthase erg7. The lanosterol 14-alpha-demethylase erg11/cyp1 catalyzes C14-demethylation of lanosterol to produce 4,4'-dimethyl cholesta-8,14,24-triene-3-beta-ol. In the next steps, a complex process involving various demethylation, reduction and desaturation reactions catalyzed by the C-14 reductase erg24 and the C-4 demethylation complex erg25-erg26-erg27 leads to the production of zymosterol. Erg28 likely functions in the C-4 demethylation complex reaction by tethering erg26 and Erg27 to the endoplasmic reticulum or to facilitate interaction between these proteins. Then, the sterol 24-C-methyltransferase erg6 catalyzes the methyl transfer from S-adenosyl-methionine to the C-24 of zymosterol to form fecosterol. The C-8 sterol isomerase erg2 catalyzes the reaction which results in unsaturation at C-7 in the B ring of sterols and thus converts fecosterol to episterol. The sterol-C5-desaturases erg31 and erg32 then catalyze the introduction of a C-5 double bond in the B ring to produce 5-dehydroepisterol. The C-22 sterol desaturase erg5 further converts 5-dehydroepisterol into ergosta-5,7,22,24(28)-tetraen-3beta-ol by forming the C-22(23) double bond in the sterol side chain. Finally, ergosta-5,7,22,24(28)-tetraen-3beta-ol is substrate of the C-24(28) sterol reductase erg4 to produce ergosterol. In the genus Schizosaccharomyces, a second route exists between lanosterol and fecosterol, via the methylation of lanosterol to eburicol by erg6, followed by C14-demethylation by erg11/cyp1 and C4-demethylation by the demethylation complex erg25-erg26-erg27. This Schizosaccharomyces pombe (strain 972 / ATCC 24843) (Fission yeast) protein is Squalene epoxidase erg1.